The primary structure comprises 815 residues: Phenylalanine--tRNA ligase beta subunit (815 aa).

The tRNA-binding domain maps to 40 to 155; it reads APPFDKIVVA…EDAPVGQNIR (116 aa). Residues 406-485 enclose the B5 domain; that stretch reads PQRRPVSLRL…RIYGFERIAA (80 aa). Mg(2+)-binding residues include Asp-463, Asp-469, Glu-472, and Glu-473. The FDX-ACB domain occupies 712 to 814; the sequence is SKFPAAVRDL…LGEAFQARLR (103 aa).

This sequence belongs to the phenylalanyl-tRNA synthetase beta subunit family. Type 1 subfamily. In terms of assembly, tetramer of two alpha and two beta subunits. Mg(2+) serves as cofactor.

Its subcellular location is the cytoplasm. The catalysed reaction is tRNA(Phe) + L-phenylalanine + ATP = L-phenylalanyl-tRNA(Phe) + AMP + diphosphate + H(+). This Cupriavidus pinatubonensis (strain JMP 134 / LMG 1197) (Cupriavidus necator (strain JMP 134)) protein is Phenylalanine--tRNA ligase beta subunit.